Reading from the N-terminus, the 471-residue chain is MEVSFSAPPPPDAASAAAAAPSLVPAVSAAAVAATTVSCSPQPPTGSPSADDRILVSVEVLLHATSTARAEDVCAAVERMLEARSLSYVDGPVPIPNDDPFLLANVKRIQICDTDEWTENHKVLLFWQVRPVVHVFQLSEDGPGEEPGEDDTLSSFNEWALPAKEFDGLWESLLYEVGLKQRLLRYAASALLFTEKGVDPCLVSWNRIVLLHGPPGTGKTSLCKALAQKLSIRFKSRYSMCQLIEVNAHSLFSKWFSESGKLVAKLFQKIQEMVEEESNLVFVLIDEVESLAAARQAAISGSEPSDSIRVVNALLTQMDKLKSWPNVIILTTSNITTAIDIAFVDRADIKAYVGPPTLQARYEILRSCLQELLRVGILTHTQGGNSLCLLSYFSLMENQHCPEVADPHGSVHLSGLLHKAAEICEGLSGRTLRKLPFLAHASVANPSCCDASAFLHALIQTAQRELSESRG.

An ATP-binding site is contributed by 213–220; it reads GPPGTGKT.

It belongs to the AAA ATPase family. PCH2 subfamily.

Its function is as follows. Plays a key role in chromosome recombination during meiosis. This Oryza sativa subsp. indica (Rice) protein is Pachytene checkpoint protein 2 homolog.